A 635-amino-acid polypeptide reads, in one-letter code: Extracellular metalloproteinase 1 (635 aa).

Residues 1–19 (MHGLLLAAGLLSLPLHVLA) form the signal peptide. A propeptide spanning residues 20 to 246 (HPQPSTSTSL…VHNVVDYVAH (227 aa)) is cleaved from the precursor. Residue asparagine 287 is glycosylated (N-linked (GlcNAc...) asparagine). Histidine 430 serves as a coordination point for Zn(2+). Glutamate 431 is an active-site residue. Zn(2+) is bound at residue histidine 434. 3 N-linked (GlcNAc...) asparagine glycosylation sites follow: asparagine 475, asparagine 594, and asparagine 623.

This sequence belongs to the peptidase M36 family. The cofactor is Zn(2+).

It is found in the secreted. Its function is as follows. Secreted metalloproteinase probably acting as a virulence factor. This Trichophyton rubrum (Athlete's foot fungus) protein is Extracellular metalloproteinase 1 (MEP1).